The primary structure comprises 630 residues: DNA topoisomerase 4 subunit B (630 aa).

ATP is bound by residues Y5, N42, D69, 110-116 (GLHGVGI), and K334. Residues 412–525 (TELFLVEGDS…NGHVYVALPP (114 aa)) enclose the Toprim domain. Positions 418, 490, and 492 each coordinate Mg(2+).

Belongs to the type II topoisomerase family. ParE type 1 subfamily. Heterotetramer composed of ParC and ParE. The cofactor is Mg(2+). It depends on Mn(2+) as a cofactor. Ca(2+) is required as a cofactor.

The enzyme catalyses ATP-dependent breakage, passage and rejoining of double-stranded DNA.. Topoisomerase IV is essential for chromosome segregation. It relaxes supercoiled DNA. Performs the decatenation events required during the replication of a circular DNA molecule. This Salmonella typhi protein is DNA topoisomerase 4 subunit B.